The sequence spans 444 residues: MFS-type transporter dbaD (444 aa).

Positions 1-13 are enriched in polar residues; it reads MTEQPPQNHSVDL. Positions 1 to 57 are disordered; it reads MTEQPPQNHSVDLNQNEDNNENDYRSSSATDAERPCEPKIEESTAKPPTGPPAPPPP. Residue N8 is glycosylated (N-linked (GlcNAc...) asparagine). Basic and acidic residues predominate over residues 31 to 44; sequence DAERPCEPKIEEST. The span at 48-57 shows a compositional bias: pro residues; the sequence is PTGPPAPPPP. A run of 11 helical transmembrane segments spans residues 62–82, 107–127, 134–154, 159–179, 192–212, 223–243, 267–287, 301–323, 330–350, 356–376, and 394–414; these read LVAWLHVIGGFMLFFNTWGIM, WIGSIQATMLLLVGFFTGSIY, ALLVVGSFCIVFGHMMLSLCK, VLLAQGFCVGIGAGCLFVPCV, TALGLAVSGSSMGGVIYPIVL, WSVRVIGFIALGTLLVPIAVM, MAFTLASLLAFMGLFALLFYI, MAFYIVPILNAASCFGRTIPNAM, FNLIAPCCLAVGVLILCLLAV, LIVIALLSGFFGGALIGLPPL, and MGFGMVGLGVLAGGPAGGAIL. The N-linked (GlcNAc...) asparagine glycan is linked to N421. The helical transmembrane segment at 424 to 444 threads the bilayer; it reads GLWVYGGVTSLVAGFIICIAV.

The protein belongs to the major facilitator superfamily. Monocarboxylate porter (TC 2.A.1.13) family.

It is found in the cell membrane. Functionally, MFS-type transporter; part of the gene cluster that mediates the biosynthesis of the antibiotic 2,4- dihydroxy-3-methyl-6-(2-oxopropyl)benzaldehyde (DHMBA) and its derivatives. Is probably involved in the transport of the metabolites to the environment. The chain is MFS-type transporter dbaD from Emericella nidulans (strain FGSC A4 / ATCC 38163 / CBS 112.46 / NRRL 194 / M139) (Aspergillus nidulans).